A 275-amino-acid polypeptide reads, in one-letter code: Ribosomal RNA small subunit methyltransferase A (275 aa).

6 residues coordinate S-adenosyl-L-methionine: asparagine 19, leucine 21, glycine 46, glutamate 71, aspartate 94, and asparagine 117.

Belongs to the class I-like SAM-binding methyltransferase superfamily. rRNA adenine N(6)-methyltransferase family. RsmA subfamily.

It localises to the cytoplasm. The catalysed reaction is adenosine(1518)/adenosine(1519) in 16S rRNA + 4 S-adenosyl-L-methionine = N(6)-dimethyladenosine(1518)/N(6)-dimethyladenosine(1519) in 16S rRNA + 4 S-adenosyl-L-homocysteine + 4 H(+). Functionally, specifically dimethylates two adjacent adenosines (A1518 and A1519) in the loop of a conserved hairpin near the 3'-end of 16S rRNA in the 30S particle. May play a critical role in biogenesis of 30S subunits. The polypeptide is Ribosomal RNA small subunit methyltransferase A (Burkholderia multivorans (strain ATCC 17616 / 249)).